The chain runs to 372 residues: Putative KilA-N domain-containing protein L32 (372 aa).

The span at 1–12 (MPHKAPKSKLFR) shows a compositional bias: basic residues. The interval 1 to 129 (MPHKAPKSKL…SDNDKSKDNF (129 aa)) is disordered. Over residues 14-36 (RYVEDSDDETRGRSRNRSVEKSR) the composition is skewed to basic and acidic residues. A compositionally biased stretch (basic residues) spans 37–53 (SKSLTRSKSKSPKKSRS). Residues 79–120 (EDSEDSEDSESDQDDDKSDNEQSDSELDDSESDDDETDDNES) are compositionally biased toward acidic residues. A KilA-N domain is found at 151-255 (KFAIGKFGDF…IKIGEWIEEW (105 aa)).

The sequence is that of Putative KilA-N domain-containing protein L32 from Acanthamoeba polyphaga (Amoeba).